The following is a 597-amino-acid chain: tRNA uridine 5-carboxymethylaminomethyl modification enzyme MnmG (597 aa).

An FAD-binding site is contributed by 10 to 15 (GGGHAG). 267–281 (GPRYCPSIEDKVVRF) contributes to the NAD(+) binding site.

The protein belongs to the MnmG family. Homodimer. Heterotetramer of two MnmE and two MnmG subunits. FAD serves as cofactor.

Its subcellular location is the cytoplasm. In terms of biological role, NAD-binding protein involved in the addition of a carboxymethylaminomethyl (cmnm) group at the wobble position (U34) of certain tRNAs, forming tRNA-cmnm(5)s(2)U34. This Thermus thermophilus (strain ATCC BAA-163 / DSM 7039 / HB27) protein is tRNA uridine 5-carboxymethylaminomethyl modification enzyme MnmG.